Consider the following 388-residue polypeptide: Translation initiation factor eIF2B subunit beta (388 aa).

The segment at 109–133 is disordered; it reads DDFETTTSNNNNNNNNNNINSSSNI. Low complexity predominate over residues 116–133; sequence SNNNNNNNNNNINSSSNI.

The protein belongs to the eIF-2B alpha/beta/delta subunits family. In terms of assembly, component of the translation initiation factor 2B (eIF2B) complex which is a heterodecamer of two sets of five different subunits: alpha, beta, gamma, delta and epsilon. Subunits alpha, beta and delta comprise a regulatory subcomplex and subunits epsilon and gamma comprise a catalytic subcomplex. Within the complex, the hexameric regulatory complex resides at the center, with the two heterodimeric catalytic subcomplexes bound on opposite sides.

The protein localises to the cytoplasm. Its subcellular location is the cytosol. Its function is as follows. Acts as a component of the translation initiation factor 2B (eIF2B) complex, which catalyzes the exchange of GDP for GTP on eukaryotic initiation factor 2 (eIF2) gamma subunit. Its guanine nucleotide exchange factor activity is repressed when bound to eIF2 complex phosphorylated on the alpha subunit, thereby limiting the amount of methionyl-initiator methionine tRNA available to the ribosome and consequently global translation is repressed. The chain is Translation initiation factor eIF2B subunit beta (eif2b2) from Dictyostelium discoideum (Social amoeba).